The sequence spans 309 residues: tRNA dimethylallyltransferase (309 aa).

11 to 18 provides a ligand contact to ATP; it reads GPTASGKS. 13–18 contributes to the substrate binding site; the sequence is TASGKS. Interaction with substrate tRNA stretches follow at residues 36 to 39 and 160 to 164; these read DSMQ and QRLLR.

It belongs to the IPP transferase family. In terms of assembly, monomer. Requires Mg(2+) as cofactor.

It carries out the reaction adenosine(37) in tRNA + dimethylallyl diphosphate = N(6)-dimethylallyladenosine(37) in tRNA + diphosphate. Functionally, catalyzes the transfer of a dimethylallyl group onto the adenine at position 37 in tRNAs that read codons beginning with uridine, leading to the formation of N6-(dimethylallyl)adenosine (i(6)A). In Caulobacter sp. (strain K31), this protein is tRNA dimethylallyltransferase.